Consider the following 195-residue polypeptide: MHPTDPSQPLGERLQGTNLYLVGMMGSGKSTVGPLLAKALGYRFLDADAVISQAAGCSIPEIFERDGEEGFRQLERQVLQQLSQWHSLVVATGGGIVTVPANWGELRQGVVIWLDVAEEELMRRLQADPGGRPLLAGDDPAGRLHGLLEKRQPLYGQADLRVSAQGEGASDISERILQQLPGLLKAPGAPQTTAP.

26-31 (GSGKST) provides a ligand contact to ATP. Serine 30 serves as a coordination point for Mg(2+). Residues aspartate 48, arginine 72, and glycine 94 each contribute to the substrate site. Residue arginine 132 coordinates ATP. Substrate is bound at residue arginine 151.

It belongs to the shikimate kinase family. In terms of assembly, monomer. Mg(2+) serves as cofactor.

It is found in the cytoplasm. It catalyses the reaction shikimate + ATP = 3-phosphoshikimate + ADP + H(+). Its pathway is metabolic intermediate biosynthesis; chorismate biosynthesis; chorismate from D-erythrose 4-phosphate and phosphoenolpyruvate: step 5/7. Functionally, catalyzes the specific phosphorylation of the 3-hydroxyl group of shikimic acid using ATP as a cosubstrate. The polypeptide is Shikimate kinase (Synechococcus sp. (strain RCC307)).